A 338-amino-acid polypeptide reads, in one-letter code: MKVFYDKDCDLSLIKGKNVAIIGYGSQGHAHAQNLNDSGCKVTVGLRKGGASWDKVKNAGLNVAEVNDAVKAADVIMILLPDENIAQVYNENVAPHAKQGAVLAFAHGFNVHYGQVVPRADLDVIMIAPKAPGHTVRGTYSQGGGVPHLIAVYQDKSGVARDIALSYAMANGGGRAGIIETNFREETETDLFGEQAVLCGGAVELIKAGFETLTEAGYAPEMAYFECLHELKLIVDLIYEGGIANMNYSISNNAEYGEYVTGPRIVTEDTKNAMRQCLKDIQTGEYAKSFILENKAGAPTLISRRRLNAEHDIEQVGAKLRAMMPWIAKNKLVDQSKN.

The 181-residue stretch at 1 to 181 (MKVFYDKDCD…GGGRAGIIET (181 aa)) folds into the KARI N-terminal Rossmann domain. NADP(+)-binding positions include 24–27 (YGSQ), Arg-47, and Ser-52. His-107 is an active-site residue. Gly-133 lines the NADP(+) pocket. Residues 182–327 (NFREETETDL…AKLRAMMPWI (146 aa)) enclose the KARI C-terminal knotted domain. Mg(2+) contacts are provided by Asp-190, Glu-194, Glu-226, and Glu-230. Residue Ser-251 participates in substrate binding.

This sequence belongs to the ketol-acid reductoisomerase family. Mg(2+) is required as a cofactor.

It carries out the reaction (2R)-2,3-dihydroxy-3-methylbutanoate + NADP(+) = (2S)-2-acetolactate + NADPH + H(+). The catalysed reaction is (2R,3R)-2,3-dihydroxy-3-methylpentanoate + NADP(+) = (S)-2-ethyl-2-hydroxy-3-oxobutanoate + NADPH + H(+). The protein operates within amino-acid biosynthesis; L-isoleucine biosynthesis; L-isoleucine from 2-oxobutanoate: step 2/4. Its pathway is amino-acid biosynthesis; L-valine biosynthesis; L-valine from pyruvate: step 2/4. Its function is as follows. Involved in the biosynthesis of branched-chain amino acids (BCAA). Catalyzes an alkyl-migration followed by a ketol-acid reduction of (S)-2-acetolactate (S2AL) to yield (R)-2,3-dihydroxy-isovalerate. In the isomerase reaction, S2AL is rearranged via a Mg-dependent methyl migration to produce 3-hydroxy-3-methyl-2-ketobutyrate (HMKB). In the reductase reaction, this 2-ketoacid undergoes a metal-dependent reduction by NADPH to yield (R)-2,3-dihydroxy-isovalerate. This Herminiimonas arsenicoxydans protein is Ketol-acid reductoisomerase (NADP(+)).